We begin with the raw amino-acid sequence, 284 residues long: Shikimate dehydrogenase (NADP(+)) (284 aa).

Residues serine 20 to serine 22 and serine 67 each bind shikimate. Lysine 71 acts as the Proton acceptor in catalysis. Aspartate 83 is an NADP(+) binding site. Shikimate is bound by residues asparagine 92 and aspartate 107. NADP(+)-binding positions include glycine 129–alanine 133 and isoleucine 227. Tyrosine 229 lines the shikimate pocket. Glycine 250 is a binding site for NADP(+).

Belongs to the shikimate dehydrogenase family. Homodimer.

The catalysed reaction is shikimate + NADP(+) = 3-dehydroshikimate + NADPH + H(+). Its pathway is metabolic intermediate biosynthesis; chorismate biosynthesis; chorismate from D-erythrose 4-phosphate and phosphoenolpyruvate: step 4/7. Its function is as follows. Involved in the biosynthesis of the chorismate, which leads to the biosynthesis of aromatic amino acids. Catalyzes the reversible NADPH linked reduction of 3-dehydroshikimate (DHSA) to yield shikimate (SA). The chain is Shikimate dehydrogenase (NADP(+)) from Streptococcus pneumoniae (strain Taiwan19F-14).